A 460-amino-acid polypeptide reads, in one-letter code: GTPase Der (460 aa).

EngA-type G domains are found at residues 4–174 and 184–361; these read PQVA…PRRE and PKIA…AERS. Residues 10–17, 57–61, 126–129, 190–197, 237–241, and 302–305 each bind GTP; these read GRPNVGKS, DTGGL, NKAE, DTAGI, and NKWD. Residues 362-446 enclose the KH-like domain; it reads RRIPTAELNQ…PIELVFRERE (85 aa).

Belongs to the TRAFAC class TrmE-Era-EngA-EngB-Septin-like GTPase superfamily. EngA (Der) GTPase family. Associates with the 50S ribosomal subunit.

Functionally, GTPase that plays an essential role in the late steps of ribosome biogenesis. This chain is GTPase Der, found in Thermomicrobium roseum (strain ATCC 27502 / DSM 5159 / P-2).